The following is a 120-amino-acid chain: Large ribosomal subunit protein bL20 (120 aa).

The protein belongs to the bacterial ribosomal protein bL20 family.

In terms of biological role, binds directly to 23S ribosomal RNA and is necessary for the in vitro assembly process of the 50S ribosomal subunit. It is not involved in the protein synthesizing functions of that subunit. The protein is Large ribosomal subunit protein bL20 of Karelsulcia muelleri (strain GWSS) (Sulcia muelleri).